A 124-amino-acid chain; its full sequence is Small ribosomal subunit protein uS12 (124 aa).

A disordered region spans residues 1-20; the sequence is MATISQLVRNPRKDKVQKTS. Aspartate 89 carries the post-translational modification 3-methylthioaspartic acid. Residues 104–124 are disordered; the sequence is TSGVTARRKGRSKYGAKRPKA. Residues 109–124 are compositionally biased toward basic residues; the sequence is ARRKGRSKYGAKRPKA.

The protein belongs to the universal ribosomal protein uS12 family. Part of the 30S ribosomal subunit. Contacts proteins S8 and S17. May interact with IF1 in the 30S initiation complex.

Functionally, with S4 and S5 plays an important role in translational accuracy. Interacts with and stabilizes bases of the 16S rRNA that are involved in tRNA selection in the A site and with the mRNA backbone. Located at the interface of the 30S and 50S subunits, it traverses the body of the 30S subunit contacting proteins on the other side and probably holding the rRNA structure together. The combined cluster of proteins S8, S12 and S17 appears to hold together the shoulder and platform of the 30S subunit. The sequence is that of Small ribosomal subunit protein uS12 from Psychromonas ingrahamii (strain DSM 17664 / CCUG 51855 / 37).